The following is a 519-amino-acid chain: Putative thymidine phosphorylase (519 aa).

This sequence belongs to the thymidine/pyrimidine-nucleoside phosphorylase family. Type 2 subfamily.

It catalyses the reaction thymidine + phosphate = 2-deoxy-alpha-D-ribose 1-phosphate + thymine. The protein is Putative thymidine phosphorylase of Maricaulis maris (strain MCS10) (Caulobacter maris).